We begin with the raw amino-acid sequence, 74 residues long: Ferredoxin MycCII (74 aa).

The 4Fe-4S ferredoxin-type domain occupies 1–29 (MRIVLDAERCVGAGQCEATAPELFTQGDD). [3Fe-4S] cluster-binding residues include Cys10, Cys16, and Cys54.

[3Fe-4S] cluster serves as cofactor.

Its pathway is antibiotic biosynthesis; mycinamicin biosynthesis. In terms of biological role, specific electron transport protein capable of effectively supporting cytochrome P450 MycCI activity in the biosynthesis of mycinamicin, a 16-membered macrolide antibiotic. The sequence is that of Ferredoxin MycCII from Micromonospora griseorubida.